The following is a 619-amino-acid chain: Telomere repeat-binding protein 3 (619 aa).

The Ubiquitin-like domain maps to 324 to 403 (VKLSIKSFRI…LDNLGFTLEP (80 aa)). Residues 504–563 (AQRRTRRPFSVTEVEALVQAVEELGTGRWRDVKLRAFEDADHRTYVDLKDKWKTLVHTAS) form the HTH myb-type domain. Residues 532–559 (WRDVKLRAFEDADHRTYVDLKDKWKTLV) constitute a DNA-binding region (H-T-H motif). Residues 593–619 (QGKHQARGASKDPDMNRGGAFESGVSV) form a disordered region.

As to quaternary structure, homodimer and heterodimer with TRP1. In terms of tissue distribution, expressed ubiquitously. Highest expression in flowers and roots.

The protein resides in the nucleus. Binds specifically to the plant telomeric double-stranded DNA sequences. At least 2 repeats of telomeric sequences are required for binding. Induces DNA bending. This is Telomere repeat-binding protein 3 (TRP3) from Arabidopsis thaliana (Mouse-ear cress).